Reading from the N-terminus, the 193-residue chain is Peptidyl-tRNA hydrolase (193 aa).

Position 15 (tyrosine 15) interacts with tRNA. Residue histidine 20 is the Proton acceptor of the active site. TRNA contacts are provided by phenylalanine 65, asparagine 67, and asparagine 113.

It belongs to the PTH family. Monomer.

The protein localises to the cytoplasm. The enzyme catalyses an N-acyl-L-alpha-aminoacyl-tRNA + H2O = an N-acyl-L-amino acid + a tRNA + H(+). In terms of biological role, hydrolyzes ribosome-free peptidyl-tRNAs (with 1 or more amino acids incorporated), which drop off the ribosome during protein synthesis, or as a result of ribosome stalling. Its function is as follows. Catalyzes the release of premature peptidyl moieties from peptidyl-tRNA molecules trapped in stalled 50S ribosomal subunits, and thus maintains levels of free tRNAs and 50S ribosomes. This is Peptidyl-tRNA hydrolase from Ehrlichia ruminantium (strain Welgevonden).